We begin with the raw amino-acid sequence, 253 residues long: 1-(5-phosphoribosyl)-5-[(5-phosphoribosylamino)methylideneamino] imidazole-4-carboxamide isomerase (253 aa).

Asp19 (proton acceptor) is an active-site residue. Asp141 serves as the catalytic Proton donor.

The protein belongs to the HisA/HisF family.

Its subcellular location is the cytoplasm. The catalysed reaction is 1-(5-phospho-beta-D-ribosyl)-5-[(5-phospho-beta-D-ribosylamino)methylideneamino]imidazole-4-carboxamide = 5-[(5-phospho-1-deoxy-D-ribulos-1-ylimino)methylamino]-1-(5-phospho-beta-D-ribosyl)imidazole-4-carboxamide. It participates in amino-acid biosynthesis; L-histidine biosynthesis; L-histidine from 5-phospho-alpha-D-ribose 1-diphosphate: step 4/9. This is 1-(5-phosphoribosyl)-5-[(5-phosphoribosylamino)methylideneamino] imidazole-4-carboxamide isomerase from Rhodopirellula baltica (strain DSM 10527 / NCIMB 13988 / SH1).